The chain runs to 463 residues: L-seryl-tRNA(Sec) selenium transferase (463 aa).

An N6-(pyridoxal phosphate)lysine modification is found at K295.

This sequence belongs to the SelA family. Homodecamer; pentamer of dimers. Binds only one seryl-tRNA(Sec) per dimer. It depends on pyridoxal 5'-phosphate as a cofactor.

It is found in the cytoplasm. It catalyses the reaction L-seryl-tRNA(Sec) + selenophosphate + H(+) = L-selenocysteinyl-tRNA(Sec) + phosphate. It functions in the pathway aminoacyl-tRNA biosynthesis; selenocysteinyl-tRNA(Sec) biosynthesis; selenocysteinyl-tRNA(Sec) from L-seryl-tRNA(Sec) (bacterial route): step 1/1. In terms of biological role, converts seryl-tRNA(Sec) to selenocysteinyl-tRNA(Sec) required for selenoprotein biosynthesis. The polypeptide is L-seryl-tRNA(Sec) selenium transferase (Salmonella typhimurium (strain LT2 / SGSC1412 / ATCC 700720)).